Here is a 267-residue protein sequence, read N- to C-terminus: Non-structural protein NS-S (267 aa).

The protein belongs to the phlebovirus NS-S protein family.

The protein is Non-structural protein NS-S (NSS) of Homo sapiens (Human).